A 331-amino-acid chain; its full sequence is Homeobox protein DBX1 (331 aa).

Disordered stretches follow at residues 56-94 and 232-331; these read RAVPPPSMSPPTSESPNCMSETSDLARREGPNQTSISSN and KERE…ITVS. A DNA-binding region (homeobox) is located at residues 173 to 232; that stretch reads GMLRRAVFSDVQRKALEKMFQKQKYISKPDRKKLAGKLGLKDSQVKIWFQNRRMKWRNSK. The segment covering 256–266 has biased composition (basic and acidic residues); the sequence is DLSDVSKKSSG. Residues 299-314 show a composition bias toward low complexity; it reads PSSPFNSSSASKPSDF. A compositionally biased stretch (acidic residues) spans 315–331; it reads SDSEEEGGEQEEEITVS.

It belongs to the H2.0 homeobox family.

It is found in the nucleus. Its function is as follows. May function within the midpoint progenitor population to inhibit neuronal differentiation, possibly through modulating the function of Xash3. In Xenopus laevis (African clawed frog), this protein is Homeobox protein DBX1 (dbx1).